The sequence spans 90 residues: N(2)-fixation sustaining protein CowN (90 aa).

This sequence belongs to the CowN family.

Its function is as follows. Is required to sustain N(2)-dependent growth in the presence of low levels of carbon monoxide (CO). Probably acts by protecting the N(2) fixation ability of the nitrogenase complex, which is inactivated in the presence of CO. This is N(2)-fixation sustaining protein CowN from Methylocella silvestris (strain DSM 15510 / CIP 108128 / LMG 27833 / NCIMB 13906 / BL2).